The sequence spans 153 residues: Probable ubiquitin-conjugating enzyme E2 C (153 aa).

Positions 6-153 constitute a UBC core domain; it reads SVSKRLQSEL…KRYQEATSRP (148 aa). Cys-90 serves as the catalytic Glycyl thioester intermediate.

This sequence belongs to the ubiquitin-conjugating enzyme family. Component of the APC/C complex. Autoubiquitinated by the APC/C complex, leading to its degradation by the proteasome.

It catalyses the reaction S-ubiquitinyl-[E1 ubiquitin-activating enzyme]-L-cysteine + [E2 ubiquitin-conjugating enzyme]-L-cysteine = [E1 ubiquitin-activating enzyme]-L-cysteine + S-ubiquitinyl-[E2 ubiquitin-conjugating enzyme]-L-cysteine.. Its pathway is protein modification; protein ubiquitination. In terms of biological role, catalyzes the covalent attachment of ubiquitin to other proteins. Acts as an essential factor of the anaphase promoting complex/cyclosome (APC/C), a cell cycle-regulated ubiquitin ligase that controls progression through mitosis. Acts by initiating polyubiquitin chains on APC/C substrates, leading to the degradation of APC/C substrates by the proteasome and promoting mitotic exit. This Dictyostelium discoideum (Social amoeba) protein is Probable ubiquitin-conjugating enzyme E2 C (ube2c).